We begin with the raw amino-acid sequence, 138 residues long: Gastrula zinc finger protein XlCGF44.2 (138 aa).

5 C2H2-type zinc fingers span residues 5 to 27 (FACT…KRIH), 32 to 54 (FVCA…QRLH), 60 to 82 (FTCT…QQIH), 88 to 110 (YVCS…MKTH), and 116 to 138 (FACS…QESH).

This sequence belongs to the krueppel C2H2-type zinc-finger protein family.

It is found in the nucleus. In terms of biological role, may be involved in transcriptional regulation. This chain is Gastrula zinc finger protein XlCGF44.2, found in Xenopus laevis (African clawed frog).